The chain runs to 121 residues: Apoptin (121 aa).

Disordered regions lie at residues 1-28 and 57-95; these read MNAH…LETP and LRSA…PSEY. The segment covering 58–70 has biased composition (polar residues); it reads RSATADNSENTGF.

Belongs to the gyrovirus apoptin family.

The protein resides in the host nucleus. In terms of biological role, may act as transcriptional regulator. Induces apoptosis in infected cells. Element of infectious replication cycle. This is Apoptin (VP3) from Gallus gallus (Chicken).